The sequence spans 546 residues: 2-isopropylmalate synthase (546 aa).

Positions 8 to 271 constitute a Pyruvate carboxyltransferase domain; it reads ILIFDTTLRD…NSFFGRSSDS (264 aa). Residues Asp-17, His-208, His-210, and Asn-244 each contribute to the Mn(2+) site. Positions 408-546 are regulatory domain; it reads QLSHVQVSCG…KNKVLSNPKK (139 aa).

This sequence belongs to the alpha-IPM synthase/homocitrate synthase family. LeuA type 1 subfamily. In terms of assembly, homodimer. Requires Mn(2+) as cofactor.

It is found in the cytoplasm. The enzyme catalyses 3-methyl-2-oxobutanoate + acetyl-CoA + H2O = (2S)-2-isopropylmalate + CoA + H(+). The protein operates within amino-acid biosynthesis; L-leucine biosynthesis; L-leucine from 3-methyl-2-oxobutanoate: step 1/4. Functionally, catalyzes the condensation of the acetyl group of acetyl-CoA with 3-methyl-2-oxobutanoate (2-ketoisovalerate) to form 3-carboxy-3-hydroxy-4-methylpentanoate (2-isopropylmalate). The protein is 2-isopropylmalate synthase of Prochlorococcus marinus subsp. pastoris (strain CCMP1986 / NIES-2087 / MED4).